The following is a 132-amino-acid chain: L-ectoine synthase (132 aa).

Belongs to the ectoine synthase family.

The catalysed reaction is (2S)-4-acetamido-2-aminobutanoate = L-ectoine + H2O. It participates in amine and polyamine biosynthesis; ectoine biosynthesis; L-ectoine from L-aspartate 4-semialdehyde: step 3/3. Its function is as follows. Catalyzes the circularization of gamma-N-acetyl-alpha,gamma-diaminobutyric acid (ADABA) to ectoine (1,4,5,6-tetrahydro-2-methyl-4-pyrimidine carboxylic acid), which is an excellent osmoprotectant. The polypeptide is L-ectoine synthase (Rhodococcus jostii (strain RHA1)).